A 208-amino-acid chain; its full sequence is Transcription factor atf-4 homolog (208 aa).

2 disordered regions span residues 18–47 (HNQTHSTPQYHNHHHHHHQSPTYPQSYFNP) and 106–165 (ERRS…EKEE). Positions 110–120 (NSSASPASNWS) are enriched in low complexity. Over residues 121 to 141 (SDEHDSQSEKSYHPYKTPEKK) the composition is skewed to basic and acidic residues. Residues 138–201 (PEKKERKKAQ…RYFKKFMTEM (64 aa)) enclose the bZIP domain. The interval 140-163 (KKERKKAQNRLAATRYREKKRREK) is basic motif. The tract at residues 173–187 (LSVTNGKLKDQVSEL) is leucine-zipper.

The protein belongs to the bZIP family.

It localises to the nucleus. Transcription factor. Involved in positively modulating longevity and stress tolerance, probably acting by positively regulating expression of transsulfuration enzyme cth-2, leading to increased hydrogen sulfide production and therefore increased protein persulfidation, a protective modification of redox-reactive cysteines. May mediate longevity and increased stress resistance induced by mTORC1 suppression. In Caenorhabditis elegans, this protein is Transcription factor atf-4 homolog.